Reading from the N-terminus, the 962-residue chain is MSSTTLTQLEHHDEFISRHIGPSADEQKAMLAELGVDSLEALTKDTVPGAILREPFLQTGEPQTEREALARLKNIAKKNQICTSYIGMGYYDTVVPNVILRNVLENPGWYTAYTPYQPEIAQGRLEALLNFQQMTMDLTGLDLASASLLDEATAAAEAMAMAKRVSKNKKSNAFFIADNVYTQTIDVVKTRAEYFGFDIIVGPAREASDHDVFGALLQYPDKQGQLHNIEQLIGELQEKKAIVAVASDLMSLLMVKSPGEMGADMVFGNAQRFGVPMGYGGPHAAFFATRDKFKRSLPGRIIGVSKDSRGRPALRMAMQTREQHIRREKANSNICTAQVLLANMASFYAVYHGPDGLRRIANRIHRLTDIVALGMQDKGVKLVNSHWFDTLTFEMKENAADVLARSKALGLNLRVDGEGMFGISLDEAKTRDDVESLFAALFGDNHGLDIDVLDSRVAGGDVESIPADLVRQSQYLQHPVFNEYHSETEMLRYIKKLENKDLALNHSMISLGSCTMKLNATAEMIPVTWPEFGQLHPFCPAEQAQGYYELVSTLSEWLIDVTGYDAMSMQPNSGAQGEYAGLLAIQKYHESRGDGHRNICLIPSSAHGTNPASAQMMNMKVVVVDCDKHGNVDMDDLKAKAEEAGENLSCIMVTYPSTHGVYEEGIKDICDLVHNYGGQVYMDGANMNAQVGVTSPGYIGSDVSHLNLHKTFCIPHGGGGPGMGPIGVKQHLAEFLPNHSIVNIDGPKAGNGAVSAAQFGSASILTISWMYIAMMGGRGLREASETAILNANYLAEKLSKHFKILYRGRNNRVAHECIIDLRPMKDAAGIAEIDVAKRLQDYGFHSPTMSFPVAGTIMVEPTESESKAELDRFIEALVSIKAEAEKVAAGEWPKDNNPLVNAPHTLADITDAEWDRPYDRKTATYPVEAVGYDKFWPTVNRIDDVFGDRNLMCSCPSIEEYR.

Position 710 is an N6-(pyridoxal phosphate)lysine (Lys710).

It belongs to the GcvP family. As to quaternary structure, the glycine cleavage system is composed of four proteins: P, T, L and H. Pyridoxal 5'-phosphate serves as cofactor.

It carries out the reaction N(6)-[(R)-lipoyl]-L-lysyl-[glycine-cleavage complex H protein] + glycine + H(+) = N(6)-[(R)-S(8)-aminomethyldihydrolipoyl]-L-lysyl-[glycine-cleavage complex H protein] + CO2. Functionally, the glycine cleavage system catalyzes the degradation of glycine. The P protein binds the alpha-amino group of glycine through its pyridoxal phosphate cofactor; CO(2) is released and the remaining methylamine moiety is then transferred to the lipoamide cofactor of the H protein. This is Glycine dehydrogenase (decarboxylating) from Idiomarina loihiensis (strain ATCC BAA-735 / DSM 15497 / L2-TR).